Reading from the N-terminus, the 122-residue chain is Flagellar protein FliT (122 aa).

Residues 1-50 (MTSTVEFINRWQRIALLSQSLLELAQRGEWDLLLQQEVSYLQRIETVMEK) are required for homodimerization. The segment at 60–98 (IQDMVAGYIKQTLDNEQLLKGLLQQRLDELSSLIGQSTR) is fliD binding.

This sequence belongs to the FliT family. In terms of assembly, homodimer. Interacts with FliD and FlhC.

The protein localises to the cytoplasm. The protein resides in the cytosol. In terms of biological role, dual-function protein that regulates the transcription of class 2 flagellar operons and that also acts as an export chaperone for the filament-capping protein FliD. As a transcriptional regulator, acts as an anti-FlhDC factor; it directly binds FlhC, thus inhibiting the binding of the FlhC/FlhD complex to class 2 promoters, resulting in decreased expression of class 2 flagellar operons. As a chaperone, effects FliD transition to the membrane by preventing its premature polymerization, and by directing it to the export apparatus. The polypeptide is Flagellar protein FliT (Salmonella paratyphi A (strain AKU_12601)).